Reading from the N-terminus, the 2157-residue chain is DExH-box ATP-dependent RNA helicase DExH14 (2157 aa).

The interval 374-394 is disordered; it reads KAASNTQSRMPTYGTQVTVQT. Residues 375 to 394 are compositionally biased toward polar residues; that stretch reads AASNTQSRMPTYGTQVTVQT. Positions 517-699 constitute a Helicase ATP-binding 1 domain; the sequence is QTVYHTNENI…FLRVNTDTGL (183 aa). Residue 530–537 coordinates ATP; it reads APTGAGKT. The short motif at 641–644 is the DEVH box element; the sequence is DEVH. The Helicase C-terminal 1 domain maps to 734–932; it reads CYKKVVDSIK…SLKDNLNAEV (199 aa). The region spanning 1008–1315 is the SEC63 1 domain; that stretch reads CTELGRVASH…LHAETYFTIS (308 aa). Positions 1365 to 1540 constitute a Helicase ATP-binding 2 domain; that stretch reads HVLYHTDNNV…WLGVGEIGLF (176 aa). 1378 to 1385 serves as a coordination point for ATP; that stretch reads APTGSGKT. Positions 1482–1485 match the DEIH box motif; sequence DEIH. One can recognise a Helicase C-terminal 2 domain in the interval 1571–1780; it reads NKPAYAAICT…GTIGNKEDAV (210 aa). One can recognise an SEC63 2 domain in the interval 1839–2150; the sequence is PTMLGTIASQ…YLGFEQEHSI (312 aa).

Belongs to the DExH box helicase family.

Its subcellular location is the nucleus. The enzyme catalyses ATP + H2O = ADP + phosphate + H(+). In terms of biological role, RNA helicase that plays an essential role in pre-mRNA splicing as component of the U5 snRNP and U4/U6-U5 tri-snRNP complexes. Involved in spliceosome assembly, activation and disassembly. In Arabidopsis thaliana (Mouse-ear cress), this protein is DExH-box ATP-dependent RNA helicase DExH14.